A 260-amino-acid polypeptide reads, in one-letter code: Putative ABC transporter ATP-binding protein PF0068 (260 aa).

An ABC transporter domain is found at 2–234 (IEVKGVWFWY…DLKRYKLEEP (233 aa)). ATP is bound at residue 34–41 (GPNGSGKT).

Belongs to the ABC transporter superfamily.

It localises to the cell membrane. Probably part of an ABC transporter complex. Responsible for energy coupling to the transport system. This chain is Putative ABC transporter ATP-binding protein PF0068, found in Pyrococcus furiosus (strain ATCC 43587 / DSM 3638 / JCM 8422 / Vc1).